Here is a 184-residue protein sequence, read N- to C-terminus: Type-1 fimbrial protein, A chain (184 aa).

An N-terminal signal peptide occupies residues 1–22; the sequence is MKHKLMTSTIASLMFVAGAAVA. An intrachain disulfide couples Cys46 to Cys86.

This sequence belongs to the fimbrial protein family.

It localises to the fimbrium. Fimbriae (also called pili), polar filaments radiating from the surface of the bacterium to a length of 0.5-1.5 micrometers and numbering 100-300 per cell, enable bacteria to colonize the epithelium of specific host organs. The chain is Type-1 fimbrial protein, A chain (fimA) from Salmonella typhi.